The chain runs to 271 residues: 4-hydroxy-tetrahydrodipicolinate reductase (271 aa).

NAD(+) is bound by residues 10–15 (GAGGRM), glutamate 36, 100–102 (GTT), and 124–127 (SGNM). The Proton donor/acceptor role is filled by histidine 157. Position 158 (histidine 158) interacts with (S)-2,3,4,5-tetrahydrodipicolinate. Residue lysine 161 is the Proton donor of the active site. 167-168 (GT) provides a ligand contact to (S)-2,3,4,5-tetrahydrodipicolinate.

It belongs to the DapB family.

It localises to the cytoplasm. The catalysed reaction is (S)-2,3,4,5-tetrahydrodipicolinate + NAD(+) + H2O = (2S,4S)-4-hydroxy-2,3,4,5-tetrahydrodipicolinate + NADH + H(+). It catalyses the reaction (S)-2,3,4,5-tetrahydrodipicolinate + NADP(+) + H2O = (2S,4S)-4-hydroxy-2,3,4,5-tetrahydrodipicolinate + NADPH + H(+). The protein operates within amino-acid biosynthesis; L-lysine biosynthesis via DAP pathway; (S)-tetrahydrodipicolinate from L-aspartate: step 4/4. In terms of biological role, catalyzes the conversion of 4-hydroxy-tetrahydrodipicolinate (HTPA) to tetrahydrodipicolinate. The sequence is that of 4-hydroxy-tetrahydrodipicolinate reductase from Rhodopseudomonas palustris (strain BisB5).